The chain runs to 257 residues: Discoidin-2 (257 aa).

Residues 1 to 155 are beta-sandwich; that stretch reads MSVPAGSVSC…SLRWELYALP (155 aa). The F5/8 type C domain maps to 10–154; sequence CLANALLNLR…ISLRWELYAL (145 aa). Residues asparagine 39, serine 40, and aspartate 47 each coordinate Ca(2+). Positions 81–83 match the Cell attachment site motif; it reads RGD. Histidine 84 is modified (phosphohistidine). Positions 156 to 162 are linker; that stretch reads VKSYSNP. The interval 163–257 is lectin-like; sequence SVQVGEVSIG…FDYVAVEFNN (95 aa). Aspartate 209, arginine 218, and tryptophan 238 together coordinate a carbohydrate.

In terms of assembly, homotrimer. In terms of processing, the N-terminus is blocked. In terms of tissue distribution, maturing spore cells.

Functionally, galactose-binding lectin. May be necessary for the primary process of spore formation and may be involved in spore coat formation. This is Discoidin-2 (dscE) from Dictyostelium discoideum (Social amoeba).